We begin with the raw amino-acid sequence, 339 residues long: UDP-galactose transporter homolog 1 (339 aa).

9 consecutive transmembrane segments (helical) span residues 5 to 25, 43 to 63, 91 to 111, 138 to 158, 171 to 191, 208 to 228, 246 to 268, 273 to 295, and 301 to 321; these read ILKH…WGLL, VPYI…LIYI, AISA…TYML, LVVL…HKPS, SSLI…LTNA, HLMF…MVLV, ISRY…FYTL, SLVL…IIVY, and LWQW…SMGK.

The protein belongs to the nucleotide-sugar transporter family. SLC35B subfamily.

The protein localises to the endoplasmic reticulum membrane. May be involved in specific transport of UDP-Gal from the cytosol to the Golgi lumen. Involved in the maintenance of optimal conditions for the folding of secretory pathway proteins in the endoplasmic reticulum. This is UDP-galactose transporter homolog 1 (HUT1) from Kluyveromyces lactis (strain ATCC 8585 / CBS 2359 / DSM 70799 / NBRC 1267 / NRRL Y-1140 / WM37) (Yeast).